Consider the following 556-residue polypeptide: Formate--tetrahydrofolate ligase (556 aa).

Residue 65–72 (TPAGEGKT) participates in ATP binding.

Belongs to the formate--tetrahydrofolate ligase family.

It catalyses the reaction (6S)-5,6,7,8-tetrahydrofolate + formate + ATP = (6R)-10-formyltetrahydrofolate + ADP + phosphate. Its pathway is one-carbon metabolism; tetrahydrofolate interconversion. The chain is Formate--tetrahydrofolate ligase from Carboxydothermus hydrogenoformans (strain ATCC BAA-161 / DSM 6008 / Z-2901).